The primary structure comprises 681 residues: DNA ligase (681 aa).

Residues Asp45 to Asp49, Ser94 to Leu95, and Glu120 contribute to the NAD(+) site. The active-site N6-AMP-lysine intermediate is the Lys122. NAD(+) is bound by residues Arg143, Glu177, Lys289, and Lys313. Zn(2+)-binding residues include Cys403, Cys406, Cys421, and Cys426. The BRCT domain maps to Ser593–Ile681.

Belongs to the NAD-dependent DNA ligase family. LigA subfamily. Requires Mg(2+) as cofactor. Mn(2+) is required as a cofactor.

It catalyses the reaction NAD(+) + (deoxyribonucleotide)n-3'-hydroxyl + 5'-phospho-(deoxyribonucleotide)m = (deoxyribonucleotide)n+m + AMP + beta-nicotinamide D-nucleotide.. Functionally, DNA ligase that catalyzes the formation of phosphodiester linkages between 5'-phosphoryl and 3'-hydroxyl groups in double-stranded DNA using NAD as a coenzyme and as the energy source for the reaction. It is essential for DNA replication and repair of damaged DNA. This Leptospira borgpetersenii serovar Hardjo-bovis (strain JB197) protein is DNA ligase.